Reading from the N-terminus, the 188-residue chain is MAADLNTLKQDLTRRMDGALETLRREFAGLRAGRASPALLEPVRVDAYGSEVPLTQVGNIGVPESRMLTVQVWDRSLVSAVEKAIRDCGLGLNPQTEGQLIRVPLPMLTEERRNELAKAAGRYAESTRVAIRAVRRDGMDQIKGHEKKSEIGEDEAKTWSDEVQKLTDHYIKRVDDALVEKEKDIRQV.

This sequence belongs to the RRF family.

The protein localises to the cytoplasm. In terms of biological role, responsible for the release of ribosomes from messenger RNA at the termination of protein biosynthesis. May increase the efficiency of translation by recycling ribosomes from one round of translation to another. This chain is Ribosome-recycling factor, found in Granulibacter bethesdensis (strain ATCC BAA-1260 / CGDNIH1).